An 851-amino-acid chain; its full sequence is DNA mismatch repair protein MutS (851 aa).

An ATP-binding site is contributed by 602–609 (GPNMSGKS).

Belongs to the DNA mismatch repair MutS family.

This protein is involved in the repair of mismatches in DNA. It is possible that it carries out the mismatch recognition step. This protein has a weak ATPase activity. The chain is DNA mismatch repair protein MutS from Streptococcus pyogenes serotype M2 (strain MGAS10270).